A 295-amino-acid chain; its full sequence is ATP synthase gamma chain (295 aa).

Belongs to the ATPase gamma chain family. F-type ATPases have 2 components, CF(1) - the catalytic core - and CF(0) - the membrane proton channel. CF(1) has five subunits: alpha(3), beta(3), gamma(1), delta(1), epsilon(1). CF(0) has three main subunits: a, b and c.

It is found in the cell inner membrane. Its function is as follows. Produces ATP from ADP in the presence of a proton gradient across the membrane. The gamma chain is believed to be important in regulating ATPase activity and the flow of protons through the CF(0) complex. The polypeptide is ATP synthase gamma chain (Bdellovibrio bacteriovorus (strain ATCC 15356 / DSM 50701 / NCIMB 9529 / HD100)).